The chain runs to 440 residues: Chromosome partition protein MukF (440 aa).

The interval 208-236 (LSETSGTLRELQDTLEAAGDKLQANLLRI) is leucine-zipper.

It belongs to the MukF family. As to quaternary structure, interacts, and probably forms a ternary complex, with MukE and MukB via its C-terminal region. The complex formation is stimulated by calcium or magnesium. It is required for an interaction between MukE and MukB.

The protein localises to the cytoplasm. Its subcellular location is the nucleoid. In terms of biological role, involved in chromosome condensation, segregation and cell cycle progression. May participate in facilitating chromosome segregation by condensation DNA from both sides of a centrally located replisome during cell division. Not required for mini-F plasmid partitioning. Probably acts via its interaction with MukB and MukE. Overexpression results in anucleate cells. It has a calcium binding activity. This chain is Chromosome partition protein MukF, found in Salmonella arizonae (strain ATCC BAA-731 / CDC346-86 / RSK2980).